The chain runs to 1485 residues: ABC multidrug transporter I (1485 aa).

2 disordered regions span residues 1-57 and 75-111; these read MDEK…EEFS and KQIS…ALRG. The span at 8–24 shows a compositional bias: polar residues; that stretch reads SESSNGSDVDSLSTASA. Asparagine 12 is a glycosylation site (N-linked (GlcNAc...) asparagine). Residues 85 to 95 are compositionally biased toward basic and acidic residues; that stretch reads GKTEDVERSDS. Asparagine 132, asparagine 335, and asparagine 451 each carry an N-linked (GlcNAc...) asparagine glycan. Residues 163 to 411 form the ABC transporter 1 domain; that stretch reads MHMLGYGKKG…FESLGFKERP (249 aa). 7 helical membrane-spanning segments follow: residues 522–542, 556–576, 600–620, 623–643, 664–684, 691–711, and 774–794; these read FAQT…GTVW, GGLL…ELVS, IAQI…FSII, FMCG…IIVL, YAMK…GYLI, EWLR…ALMV, and FGIM…HGET. The 244-residue stretch at 846-1089 folds into the ABC transporter 2 domain; the sequence is FTWEDVCYDV…LLDYFRRNGA (244 aa). 882-889 serves as a coordination point for ATP; it reads GASGAGKT. 5 helical membrane passes run 1184–1204, 1211–1231, 1268–1288, 1299–1319, and 1325–1345; these read YGFT…LAFL, ASLQ…AIIL, LPYS…IPGF, FLMV…ISAL, and IASQ…GVAI. Residues asparagine 1396 and asparagine 1418 are each glycosylated (N-linked (GlcNAc...) asparagine). A helical membrane pass occupies residues 1449-1469; it reads LGIFLAFIGSNLIILFLAVSF.

Belongs to the ABC transporter superfamily. ABCG family. PDR (TC 3.A.1.205) subfamily.

It localises to the cell membrane. It carries out the reaction fluconazole(in) + ATP + H2O = fluconazole(out) + ADP + phosphate + H(+). Its activity is regulated as follows. The efflux inhibitor FK506 does not impair the transport activity. ABC efflux transporter that confers resistance to fluconazole (FLC) but shows no resistance to other azoles. Is also able to transport rhodamine 6G (R-6G), a known substrate for many ABC transporters. In Aspergillus fumigatus (strain ATCC MYA-4609 / CBS 101355 / FGSC A1100 / Af293) (Neosartorya fumigata), this protein is ABC multidrug transporter I.